The sequence spans 429 residues: Enolase (429 aa).

Gln-166 provides a ligand contact to (2R)-2-phosphoglycerate. Catalysis depends on Glu-208, which acts as the Proton donor. Asp-245, Glu-289, and Asp-316 together coordinate Mg(2+). Lys-341, Arg-370, Ser-371, and Lys-392 together coordinate (2R)-2-phosphoglycerate. Lys-341 (proton acceptor) is an active-site residue.

It belongs to the enolase family. Component of the RNA degradosome, a multiprotein complex involved in RNA processing and mRNA degradation. Mg(2+) is required as a cofactor.

Its subcellular location is the cytoplasm. The protein localises to the secreted. It is found in the cell surface. It carries out the reaction (2R)-2-phosphoglycerate = phosphoenolpyruvate + H2O. It participates in carbohydrate degradation; glycolysis; pyruvate from D-glyceraldehyde 3-phosphate: step 4/5. Its function is as follows. Catalyzes the reversible conversion of 2-phosphoglycerate (2-PG) into phosphoenolpyruvate (PEP). It is essential for the degradation of carbohydrates via glycolysis. The sequence is that of Enolase from Acinetobacter baumannii (strain AB307-0294).